The chain runs to 885 residues: Eukaryotic translation initiation factor 3 subunit C (885 aa).

The disordered stretch occupies residues methionine 1–valine 81. Residues glycine 9 to serine 28 are compositionally biased toward low complexity. A compositionally biased stretch (acidic residues) spans glutamate 55–aspartate 76. One can recognise a PCI domain in the interval phenylalanine 624 to glutamine 797. Positions leucine 822–glutamine 885 are disordered. The span at arginine 855–glutamine 872 shows a compositional bias: gly residues.

Belongs to the eIF-3 subunit C family. In terms of assembly, component of the eukaryotic translation initiation factor 3 (eIF-3) complex.

Its subcellular location is the cytoplasm. Its function is as follows. Component of the eukaryotic translation initiation factor 3 (eIF-3) complex, which is involved in protein synthesis of a specialized repertoire of mRNAs and, together with other initiation factors, stimulates binding of mRNA and methionyl-tRNAi to the 40S ribosome. The eIF-3 complex specifically targets and initiates translation of a subset of mRNAs involved in cell proliferation. This chain is Eukaryotic translation initiation factor 3 subunit C, found in Cryptococcus neoformans var. neoformans serotype D (strain B-3501A) (Filobasidiella neoformans).